We begin with the raw amino-acid sequence, 294 residues long: uncharacterized protein (294 aa).

The N-terminal stretch at 1–19 is a signal peptide; the sequence is MFKRSLFILLLLAASLVKA.

This is an uncharacterized protein from Rickettsia felis (strain ATCC VR-1525 / URRWXCal2) (Rickettsia azadi).